Here is a 541-residue protein sequence, read N- to C-terminus: uncharacterized protein (541 aa).

6 helical membrane-spanning segments follow: residues 57-77, 90-110, 144-164, 167-187, 221-241, and 257-277; these read LVVTANLLGIGVALLLVTIAI, LTFGVVPGYVLLALALGSYAL, VGHLMFWGVGTALLTTLYGLI, AFIPRFLFAVSFCGVLVATAT, MVVWLLGSGVPVVGIALMAMF, and VLIISMVTLVFGFILMWILAW. Positions 278–329 constitute an HAMP domain; the sequence is LTATPVRVVRAALRRVERGELRTNLVVFDGTELGELQRGFNAMVAGLRERER. Residues 361-485 enclose the Guanylate cyclase domain; sequence AVVFIDIVGS…EPVNEAARLC (125 aa).

The protein belongs to the adenylyl cyclase class-3 family.

Its subcellular location is the cell membrane. This is an uncharacterized protein from Mycobacterium tuberculosis (strain CDC 1551 / Oshkosh).